Reading from the N-terminus, the 122-residue chain is Large ribosomal subunit protein uL18 (122 aa).

The segment covering methionine 1 to leucine 21 has biased composition (basic residues). The disordered stretch occupies residues methionine 1 to aspartate 26.

Belongs to the universal ribosomal protein uL18 family. As to quaternary structure, part of the 50S ribosomal subunit; part of the 5S rRNA/L5/L18/L25 subcomplex. Contacts the 5S and 23S rRNAs.

This is one of the proteins that bind and probably mediate the attachment of the 5S RNA into the large ribosomal subunit, where it forms part of the central protuberance. This Parasynechococcus marenigrum (strain WH8102) protein is Large ribosomal subunit protein uL18.